Here is a 149-residue protein sequence, read N- to C-terminus: uncharacterized protein (149 aa).

The tract at residues 1–103 (MFGLKVKNAE…SPTQGSRLRH (103 aa)) is disordered. The span at 7-18 (KNAEADTAKSNE) shows a compositional bias: basic and acidic residues. The span at 26-41 (TGSSTTSGSGQSTQRG) shows a compositional bias: low complexity. Polar residues predominate over residues 61–72 (GSQGNSGDQGTE).

It belongs to the adhesin P1 family.

This is an uncharacterized protein from Mycoplasma pneumoniae (strain ATCC 29342 / M129 / Subtype 1) (Mycoplasmoides pneumoniae).